The following is a 58-amino-acid chain: Ribulose bisphosphate carboxylase large chain (58 aa).

Positions 1–2 (MS) are excised as a propeptide. N-acetylproline is present on proline 3. At lysine 14 the chain carries N6,N6,N6-trimethyllysine.

It belongs to the RuBisCO large chain family. Type I subfamily. As to quaternary structure, heterohexadecamer of 8 large chains and 8 small chains.

Its subcellular location is the plastid. The protein localises to the chloroplast. It catalyses the reaction 2 (2R)-3-phosphoglycerate + 2 H(+) = D-ribulose 1,5-bisphosphate + CO2 + H2O. The enzyme catalyses D-ribulose 1,5-bisphosphate + O2 = 2-phosphoglycolate + (2R)-3-phosphoglycerate + 2 H(+). Functionally, ruBisCO catalyzes two reactions: the carboxylation of D-ribulose 1,5-bisphosphate, the primary event in carbon dioxide fixation, as well as the oxidative fragmentation of the pentose substrate in the photorespiration process. Both reactions occur simultaneously and in competition at the same active site. This Rosa damascena (Damask rose) protein is Ribulose bisphosphate carboxylase large chain (rbcL).